Here is a 395-residue protein sequence, read N- to C-terminus: Acetate kinase (395 aa).

N7 contributes to the Mg(2+) binding site. Residue K14 participates in ATP binding. R90 contacts substrate. Catalysis depends on D147, which acts as the Proton donor/acceptor. Residues 207–211 (HLGNG), 282–284 (DFR), and 330–334 (GLGEN) each bind ATP. E383 is a Mg(2+) binding site.

This sequence belongs to the acetokinase family. As to quaternary structure, homodimer. Mg(2+) is required as a cofactor. Mn(2+) serves as cofactor.

The protein localises to the cytoplasm. It carries out the reaction acetate + ATP = acetyl phosphate + ADP. Its pathway is metabolic intermediate biosynthesis; acetyl-CoA biosynthesis; acetyl-CoA from acetate: step 1/2. Catalyzes the formation of acetyl phosphate from acetate and ATP. Can also catalyze the reverse reaction. This is Acetate kinase from Lachnoclostridium phytofermentans (strain ATCC 700394 / DSM 18823 / ISDg) (Clostridium phytofermentans).